Consider the following 857-residue polypeptide: Protein sip-5 (857 aa).

6 disordered regions span residues 1-81 (MGNA…ARRL), 157-231 (GLPI…FKPT), 384-416 (SESSVNSGSLSPGVASPGGRRRNQSLSANAPNV), 466-517 (FGRR…GNRR), 545-747 (KAEK…PMFN), and 763-857 (HAGK…QVTL). 2 stretches are compositionally biased toward basic and acidic residues: residues 7 to 16 (KESRGDDSGR) and 36 to 48 (ESSRRNRNTRHDL). A compositionally biased stretch (low complexity) spans 49-61 (TGLLGRAAGGSSS). Residues 62–81 (HADERHERKETKQEREARRL) show a composition bias toward basic and acidic residues. Polar residues-rich tracts occupy residues 179–191 (ASPTDASSNTNHL) and 199–208 (SLSTASEHST). 3 stretches are compositionally biased toward low complexity: residues 209-230 (SNAGSALPSPGSGKGSSSPFKP), 384-394 (SESSVNSGSLS), and 476-504 (SASATPGNGDENRGTGPATPANAGATANT). Residues 545 to 572 (KAEKEEQKEAKKREKEREKAEKKAEKAA) are compositionally biased toward basic and acidic residues. Low complexity-rich tracts occupy residues 586 to 604 (SRSGHSSASGSSLSLPGLS) and 621 to 645 (ASVASAMASTGAAMTTPAAPGALAP). A compositionally biased stretch (basic and acidic residues) spans 648–657 (STKDKGKAVD). Residues 688–697 (SSASSASSSA) are compositionally biased toward low complexity. Residues 698–712 (VESNQGSYVPPSNLQ) show a composition bias toward polar residues. Residues 783–799 (ETAKSGEGAGEHVEHVL) are compositionally biased toward basic and acidic residues. Polar residues-rich tracts occupy residues 800–838 (DSQTTGISEQDSEINSQPPRLTVTLDSPATSVGDVSTAS) and 845–857 (NETTVEHATQVTL).

The protein belongs to the SIP5 family.

Its subcellular location is the cytoplasm. Its function is as follows. May negatively regulate the snf-1 kinase. In Neurospora crassa (strain ATCC 24698 / 74-OR23-1A / CBS 708.71 / DSM 1257 / FGSC 987), this protein is Protein sip-5 (sip-5).